The primary structure comprises 99 residues: uncharacterized protein (99 aa).

The first 19 residues, 1-19 (MLGMIRWVVEGTLVAMLLS), serve as a signal peptide directing secretion. The disordered stretch occupies residues 71 to 99 (DGFGRINDSGPKRRGRDQSQYSSRFVELD).

It localises to the cytoplasm. This is an uncharacterized protein from Saccharomyces cerevisiae (strain ATCC 204508 / S288c) (Baker's yeast).